Here is an 879-residue protein sequence, read N- to C-terminus: Alanine--tRNA ligase (879 aa).

Residues histidine 566, histidine 570, cysteine 668, and histidine 672 each contribute to the Zn(2+) site.

This sequence belongs to the class-II aminoacyl-tRNA synthetase family. Zn(2+) serves as cofactor.

Its subcellular location is the cytoplasm. The catalysed reaction is tRNA(Ala) + L-alanine + ATP = L-alanyl-tRNA(Ala) + AMP + diphosphate. Catalyzes the attachment of alanine to tRNA(Ala) in a two-step reaction: alanine is first activated by ATP to form Ala-AMP and then transferred to the acceptor end of tRNA(Ala). Also edits incorrectly charged Ser-tRNA(Ala) and Gly-tRNA(Ala) via its editing domain. This Clostridium kluyveri (strain ATCC 8527 / DSM 555 / NBRC 12016 / NCIMB 10680 / K1) protein is Alanine--tRNA ligase.